The sequence spans 309 residues: Probable manganese-dependent inorganic pyrophosphatase (309 aa).

Mn(2+) contacts are provided by H9, D13, D15, D75, H97, and D149.

This sequence belongs to the PPase class C family. Requires Mn(2+) as cofactor.

The protein localises to the cytoplasm. It carries out the reaction diphosphate + H2O = 2 phosphate + H(+). This chain is Probable manganese-dependent inorganic pyrophosphatase, found in Lactiplantibacillus plantarum (strain ATCC BAA-793 / NCIMB 8826 / WCFS1) (Lactobacillus plantarum).